The following is a 659-amino-acid chain: Forkhead box protein P1-B (659 aa).

2 stretches are compositionally biased toward polar residues: residues 1-16 (MMQESGTEAANGTAHQ) and 32-41 (KSTTPSSDIT). Disordered stretches follow at residues 1–41 (MMQE…SDIT) and 229–263 (ENSVTNNGHRGLDLSSPSPVPLKNHNQHGSTNGQY). The segment at 289–314 (GVCKWPGCEAVFEDFQSFLKHLNNEH) adopts a C2H2-type zinc-finger fold. Residues 331–352 (VQQLELQLAKDKERLQAMMTHL) form a leucine-zipper region. Residues 365 to 369 (PLNLV) are CTBP1-binding. Positions 379–413 (PAASPPLSLPQTPTTPTAPLTPLSQTHSVITPTSL) are disordered. Over residues 387-404 (LPQTPTTPTAPLTPLSQT) the composition is skewed to low complexity. The segment at residues 448-538 (RPPFTYASLI…PQKISGSPAL (91 aa)) is a DNA-binding region (fork-head). Positions 590-659 (GAMDHGNSNG…EDDHGTEDML (70 aa)) are disordered. Positions 595–605 (GNSNGSDSSPG) are enriched in polar residues. Over residues 641–659 (PDFDHHRDYEDDHGTEDML) the composition is skewed to basic and acidic residues.

Shows complex and dynamic expression during early embryonic development. Prominent in many regions of the developing central nervous system, particularly in midbrain-hindbrain boundary, hindbrain and spinal cord. Strongly expressed in the retina, ear, branchial arches, hatching gland, heart, pronephric duct, gut, proctodeum, pectoral fin and swim bladder.

The protein resides in the nucleus. Functionally, transcriptional repressor. The polypeptide is Forkhead box protein P1-B (foxp1b) (Danio rerio (Zebrafish)).